Here is a 357-residue protein sequence, read N- to C-terminus: MPLSRLIIQQFRNIKACDIDLSAGFNFLIGPNGSGKTSVLEAIYLLGHGRSFKSSLTGRVIQNECDELFVHGRFLNSDQFELPIGINKQRDGSTEVKIGGQSGQKLAQLAQVLPLQLIHPEGFDLLTDGPKHRRAFIDWGVFHTEPAFYDAWGRFKRLNKQRNALLKTARSYRELSYWDQEMAHLAENISQWRALYIEQMKTVAETICQTFLPEFEIQLKYYRGWDKDTPYHEILEKNFERDQSLGYTFSGPNKADLRIKVNGTPVEDVLSRGQLKLMVCALRVAQGQHLTEMTGKQCIYLIDDFASELDSQRRKRLADCLKETGAQVFVSSITESQIADMLDDTGKLFHVEHGRIE.

Residue Gly-30 to Thr-37 coordinates ATP.

The protein belongs to the RecF family.

The protein localises to the cytoplasm. In terms of biological role, the RecF protein is involved in DNA metabolism; it is required for DNA replication and normal SOS inducibility. RecF binds preferentially to single-stranded, linear DNA. It also seems to bind ATP. The polypeptide is DNA replication and repair protein RecF (Vibrio campbellii (strain ATCC BAA-1116)).